The chain runs to 359 residues: MNKIIVGLSGGVDSSTAAAILHHQGYQVEGLTLWLMKGKGQCCSEGMVDAAYICEQLDIPHHIVDTRNLFQANIVDYLVTGYSAGITPLPCSQCNKTVKFGPMLAYGREKLGIDKIATGHYARLDYDSKSDRYLLKRAIDRNKDQSYFLYDLTQYLLAGSVFPLGEMVKSETRRIAAEYGLKTADKPESQDLCLVESSGSMRAFLDKYITPHQGEIVDREGRVLGRHDGVHHYTIGQRKGLGVSAPHPLYVIDLDPAMNKVIVGDRDSATKMESTVKLVNWVSIAPPSTSIRAEVQVRYRSLPVAANIIPLGVNEEKPQDGFRVKLIFEEAVFGITPGQAAVWYEGDILLGGGIIENEK.

ATP-binding positions include 7-14 (GLSGGVDS) and L33. The Nucleophile role is filled by C94. Cysteines 94 and 193 form a disulfide. An ATP-binding site is contributed by G119. Positions 143–145 (KDQ) are interaction with tRNA. The active-site Cysteine persulfide intermediate is the C193. Residues 298–299 (RY) form an interaction with tRNA region.

The protein belongs to the MnmA/TRMU family.

It is found in the cytoplasm. The catalysed reaction is S-sulfanyl-L-cysteinyl-[protein] + uridine(34) in tRNA + AH2 + ATP = 2-thiouridine(34) in tRNA + L-cysteinyl-[protein] + A + AMP + diphosphate + H(+). Catalyzes the 2-thiolation of uridine at the wobble position (U34) of tRNA, leading to the formation of s(2)U34. This is tRNA-specific 2-thiouridylase MnmA from Trichodesmium erythraeum (strain IMS101).